The following is a 205-amino-acid chain: Putative glutamine amidotransferase-like protein L716 (205 aa).

Residues 1-176 (MLLIIQNGYI…SNHIESYDYA (176 aa)) enclose the Glutamine amidotransferase type-1 domain. Active-site for GATase activity residues include Cys-82, His-155, and Asp-157.

The chain is Putative glutamine amidotransferase-like protein L716 from Acanthamoeba polyphaga mimivirus (APMV).